Reading from the N-terminus, the 339-residue chain is Tetraacyldisaccharide 4'-kinase (339 aa).

ATP is bound at residue 44 to 51 (TVGGTGKT).

It belongs to the LpxK family.

The enzyme catalyses a lipid A disaccharide + ATP = a lipid IVA + ADP + H(+). It participates in glycolipid biosynthesis; lipid IV(A) biosynthesis; lipid IV(A) from (3R)-3-hydroxytetradecanoyl-[acyl-carrier-protein] and UDP-N-acetyl-alpha-D-glucosamine: step 6/6. Functionally, transfers the gamma-phosphate of ATP to the 4'-position of a tetraacyldisaccharide 1-phosphate intermediate (termed DS-1-P) to form tetraacyldisaccharide 1,4'-bis-phosphate (lipid IVA). The protein is Tetraacyldisaccharide 4'-kinase of Bdellovibrio bacteriovorus (strain ATCC 15356 / DSM 50701 / NCIMB 9529 / HD100).